The chain runs to 119 residues: Large ribosomal subunit protein bL17 (119 aa).

The protein belongs to the bacterial ribosomal protein bL17 family. As to quaternary structure, part of the 50S ribosomal subunit. Contacts protein L32.

The polypeptide is Large ribosomal subunit protein bL17 (Mesoplasma florum (strain ATCC 33453 / NBRC 100688 / NCTC 11704 / L1) (Acholeplasma florum)).